The sequence spans 330 residues: Ketol-acid reductoisomerase (NADP(+)) (330 aa).

One can recognise a KARI N-terminal Rossmann domain in the interval 3–184 (LSVYYDKDID…GGGRMGVLET (182 aa)). Residues 26 to 29 (YGTQ), S52, and S54 contribute to the NADP(+) site. H109 is an active-site residue. G135 contacts NADP(+). In terms of domain architecture, KARI C-terminal knotted spans 185–329 (SFKEECESDL…EILRTPFNHE (145 aa)). Residues D193, E197, E229, and E233 each coordinate Mg(2+). S254 provides a ligand contact to substrate.

It belongs to the ketol-acid reductoisomerase family. Requires Mg(2+) as cofactor.

The enzyme catalyses (2R)-2,3-dihydroxy-3-methylbutanoate + NADP(+) = (2S)-2-acetolactate + NADPH + H(+). The catalysed reaction is (2R,3R)-2,3-dihydroxy-3-methylpentanoate + NADP(+) = (S)-2-ethyl-2-hydroxy-3-oxobutanoate + NADPH + H(+). Its pathway is amino-acid biosynthesis; L-isoleucine biosynthesis; L-isoleucine from 2-oxobutanoate: step 2/4. The protein operates within amino-acid biosynthesis; L-valine biosynthesis; L-valine from pyruvate: step 2/4. Functionally, involved in the biosynthesis of branched-chain amino acids (BCAA). Catalyzes an alkyl-migration followed by a ketol-acid reduction of (S)-2-acetolactate (S2AL) to yield (R)-2,3-dihydroxy-isovalerate. In the isomerase reaction, S2AL is rearranged via a Mg-dependent methyl migration to produce 3-hydroxy-3-methyl-2-ketobutyrate (HMKB). In the reductase reaction, this 2-ketoacid undergoes a metal-dependent reduction by NADPH to yield (R)-2,3-dihydroxy-isovalerate. The sequence is that of Ketol-acid reductoisomerase (NADP(+)) from Helicobacter acinonychis (strain Sheeba).